A 139-amino-acid chain; its full sequence is Gonadotropin subunit beta-2 (139 aa).

Residues 1-24 (MFPLVLSLFLGATSDIWPLAPAEA) form the signal peptide. 6 cysteine pairs are disulfide-bonded: cysteine 30-cysteine 78, cysteine 44-cysteine 93, cysteine 47-cysteine 131, cysteine 55-cysteine 109, cysteine 59-cysteine 111, and cysteine 114-cysteine 121. N-linked (GlcNAc...) asparagine glycosylation occurs at asparagine 34.

It belongs to the glycoprotein hormones subunit beta family. Heterodimer of an alpha and a beta chain.

It localises to the secreted. Involved in gametogenesis and steroidogenesis. The protein is Gonadotropin subunit beta-2 (cgbb) of Morone saxatilis (Striped bass).